Consider the following 423-residue polypeptide: MDRIIIEGGNTQLKGEVVIEGAKNAVLPLLAAAILPTEGQTLLKNVPILSDVFTMNNVVRGLNVAVDFDEERNQILVDATGDILDVAPYEYVSQMRASIVVLGPILARNGHAKVSMPGGCTIGSRPIDLHLKGLEAMGAKIQQTGGDITATADRLKGANIYMDFPSVGATQNLMMAATLADGTTIIENAAREPEIVDLANLLNKMGARVIGAGTETLTIIGVDKMHGTDHSVVQDRIEAGTFMVAAAMTNGNVLVKNAVWEHNRPLISKLREMGVQVTEEERGIRVISDVTKLRPVTVKTMPHPGFPTDMQAQFTALMAVVKGESTMIETVFENRFQHLEEMRRMGLTSEILRDTAMIHGGEQLQGAQVMSTDLRASAALILTGMVADGKTTVGKLNHLDRGYYQFHEKLTKLGATISRVNGE.

23–24 contacts phosphoenolpyruvate; sequence KN. Position 96 (R96) interacts with UDP-N-acetyl-alpha-D-glucosamine. The active-site Proton donor is the C120. C120 is modified (2-(S-cysteinyl)pyruvic acid O-phosphothioketal). UDP-N-acetyl-alpha-D-glucosamine contacts are provided by residues 125–129, D309, and V331; that span reads RPIDL.

The protein belongs to the EPSP synthase family. MurA subfamily.

The protein localises to the cytoplasm. It carries out the reaction phosphoenolpyruvate + UDP-N-acetyl-alpha-D-glucosamine = UDP-N-acetyl-3-O-(1-carboxyvinyl)-alpha-D-glucosamine + phosphate. The protein operates within cell wall biogenesis; peptidoglycan biosynthesis. Cell wall formation. Adds enolpyruvyl to UDP-N-acetylglucosamine. This is UDP-N-acetylglucosamine 1-carboxyvinyltransferase 1 from Streptococcus mutans serotype c (strain ATCC 700610 / UA159).